The primary structure comprises 248 residues: Triosephosphate isomerase (248 aa).

Substrate-binding residues include Asn10 and Lys12. His95 acts as the Electrophile in catalysis. The active-site Proton acceptor is Glu165.

This sequence belongs to the triosephosphate isomerase family. In terms of assembly, homodimer.

The catalysed reaction is D-glyceraldehyde 3-phosphate = dihydroxyacetone phosphate. Its pathway is carbohydrate biosynthesis; gluconeogenesis. It functions in the pathway carbohydrate degradation; glycolysis; D-glyceraldehyde 3-phosphate from glycerone phosphate: step 1/1. This Kluyveromyces marxianus (Yeast) protein is Triosephosphate isomerase (TPI1).